The following is a 309-amino-acid chain: Homoserine kinase (309 aa).

Residue 91-101 (PIGSGLGSSAC) coordinates ATP.

This sequence belongs to the GHMP kinase family. Homoserine kinase subfamily.

The protein resides in the cytoplasm. It catalyses the reaction L-homoserine + ATP = O-phospho-L-homoserine + ADP + H(+). Its pathway is amino-acid biosynthesis; L-threonine biosynthesis; L-threonine from L-aspartate: step 4/5. In terms of biological role, catalyzes the ATP-dependent phosphorylation of L-homoserine to L-homoserine phosphate. In Serratia marcescens, this protein is Homoserine kinase (thrB).